We begin with the raw amino-acid sequence, 165 residues long: uncharacterized protein (165 aa).

2 helical membrane-spanning segments follow: residues 7 to 27 (LWLALVLLILSIPAVSAQITV) and 141 to 161 (KGTPGFEAFVAVAVIGSIALL).

It localises to the cell membrane. This is an uncharacterized protein from Archaeoglobus fulgidus (strain ATCC 49558 / DSM 4304 / JCM 9628 / NBRC 100126 / VC-16).